The primary structure comprises 470 residues: 3-isopropylmalate dehydratase large subunit (470 aa).

[4Fe-4S] cluster-binding residues include Cys349, Cys409, and Cys412.

The protein belongs to the aconitase/IPM isomerase family. LeuC type 1 subfamily. In terms of assembly, heterodimer of LeuC and LeuD. [4Fe-4S] cluster serves as cofactor.

The enzyme catalyses (2R,3S)-3-isopropylmalate = (2S)-2-isopropylmalate. It functions in the pathway amino-acid biosynthesis; L-leucine biosynthesis; L-leucine from 3-methyl-2-oxobutanoate: step 2/4. Catalyzes the isomerization between 2-isopropylmalate and 3-isopropylmalate, via the formation of 2-isopropylmaleate. The polypeptide is 3-isopropylmalate dehydratase large subunit (Koribacter versatilis (strain Ellin345)).